Here is a 69-residue protein sequence, read N- to C-terminus: KKDDYPVDTAERNCKFECNIVDDKGYCDNLCKGRKAEKGYCYSLKASCYCYGLPDDSPTKTSKRCNPNV.

An LCN-type CS-alpha/beta domain is found at 2 to 66 (KDDYPVDTAE…SPTKTSKRCN (65 aa)). 4 disulfide bridges follow: cysteine 14–cysteine 65, cysteine 18–cysteine 41, cysteine 27–cysteine 48, and cysteine 31–cysteine 50.

This sequence belongs to the long (4 C-C) scorpion toxin superfamily. Sodium channel inhibitor family. Expressed by the venom gland.

The protein localises to the secreted. Its function is as follows. Inhibits voltage-gated sodium channels (Nav). This toxin shows insect lethality against crickets. This is Toxin Tma2 from Tityus macrochirus (Scorpion).